A 198-amino-acid polypeptide reads, in one-letter code: Beta-crystallin A1-2 (198 aa).

The N-terminal arm stretch occupies residues 1 to 13; that stretch reads MAQINPLPVPLGP. 2 consecutive Beta/gamma crystallin 'Greek key' domains span residues 14–53 and 54–100; these read WKIT…KVEC and GAWI…RPIC. Residues 101–106 are connecting peptide; that stretch reads SANHIE. 2 Beta/gamma crystallin 'Greek key' domains span residues 107–148 and 149–197; these read SKLV…KVQC and GAWV…RRIQ.

It belongs to the beta/gamma-crystallin family. In terms of assembly, homo/heterodimer, or complexes of higher-order. The structure of beta-crystallin oligomers seems to be stabilized through interactions between the N-terminal arms. Post-translationally, the N-terminus is blocked.

Crystallins are the dominant structural components of the vertebrate eye lens. This Aquarana catesbeiana (American bullfrog) protein is Beta-crystallin A1-2.